The following is a 294-amino-acid chain: Holothin acyltransferase (294 aa).

The 130-residue stretch at Trp17 to Gln146 folds into the N-acetyltransferase domain.

It carries out the reaction marinoloyl-CoA C + holothin = thiomarinol C + CoA. It catalyses the reaction pseudomonoyl-CoA C + holothin = pseudomonic acid C--holothin + CoA. It participates in antibiotic biosynthesis. Its function is as follows. Acyltransferase that catalyzes the formation of pseudomonic acid C-holothin (PAC-holothin), a thiomarinol analog, from pseudomonoyl-CoA C (PAC-CoA) and holothin. Accepts linear CoA substrates of different lengths, including propionyl-, hexanoyl-, octanoyl-, oleoyl- and dodecanoyl-CoA, readily converting all into the corresponding acyl-holothin adducts. In vivo, is probably involved in the biosynthesis of thiomarinol, a naturally occurring double-headed antibiotic. This is Holothin acyltransferase from Pseudoalteromonas sp. (strain SANK 73390).